A 351-amino-acid chain; its full sequence is Beta-hexosaminidase (351 aa).

Substrate contacts are provided by residues aspartate 62, arginine 70, arginine 133, and 163 to 164 (KH). Histidine 176 acts as the Proton donor/acceptor in catalysis. The active-site Nucleophile is the aspartate 248.

Belongs to the glycosyl hydrolase 3 family. NagZ subfamily. In terms of assembly, monomer.

The protein resides in the cytoplasm. The catalysed reaction is Hydrolysis of terminal non-reducing N-acetyl-D-hexosamine residues in N-acetyl-beta-D-hexosaminides.. It functions in the pathway cell wall biogenesis; peptidoglycan recycling. Its function is as follows. Plays a role in peptidoglycan recycling by cleaving the terminal beta-1,4-linked N-acetylglucosamine (GlcNAc) from peptide-linked peptidoglycan fragments, giving rise to free GlcNAc, anhydro-N-acetylmuramic acid and anhydro-N-acetylmuramic acid-linked peptides. This Haemophilus influenzae (strain ATCC 51907 / DSM 11121 / KW20 / Rd) protein is Beta-hexosaminidase.